The sequence spans 404 residues: tRNA N6-adenosine threonylcarbamoyltransferase, mitochondrial (404 aa).

Residues 1–27 (MFQSCLPGALRSWSRGVFSTSTRPRLV) constitute a mitochondrion transit peptide. Residues His135 and His139 each contribute to the a divalent metal cation site. Substrate contacts are provided by residues 157–161 (LVSGG), Asp190, Gly210, Glu214, 317–318 (SN), and Thr345. Asp346 is an a divalent metal cation binding site.

Belongs to the KAE1 / TsaD family. Monomer. The cofactor is a divalent metal cation.

It is found in the mitochondrion. It carries out the reaction L-threonylcarbamoyladenylate + adenosine(37) in tRNA = N(6)-L-threonylcarbamoyladenosine(37) in tRNA + AMP + H(+). Required for the formation of a threonylcarbamoyl group on adenosine at position 37 (t(6)A37) in mitochondrial tRNAs that read codons beginning with adenine. Probably involved in the transfer of the threonylcarbamoyl moiety of threonylcarbamoyl-AMP (TC-AMP) to the N6 group of A37. Involved in mitochondrial genome maintenance. The sequence is that of tRNA N6-adenosine threonylcarbamoyltransferase, mitochondrial from Danio rerio (Zebrafish).